The following is a 64-amino-acid chain: Large ribosomal subunit protein eL24 (64 aa).

Zn(2+) contacts are provided by cysteine 6, cysteine 9, cysteine 32, and cysteine 36. A C4-type zinc finger spans residues 6–36 (CNFCGKSIEPGTGKKFVKKDGSVMFICSSKC).

Belongs to the eukaryotic ribosomal protein eL24 family. As to quaternary structure, part of the 50S ribosomal subunit. Forms a cluster with proteins L3 and L14. Zn(2+) serves as cofactor.

Its function is as follows. Binds to the 23S rRNA. This Methanococcus aeolicus (strain ATCC BAA-1280 / DSM 17508 / OCM 812 / Nankai-3) protein is Large ribosomal subunit protein eL24.